Consider the following 404-residue polypeptide: Tyrosine--tRNA ligase (404 aa).

Positions Pro45 to His54 match the 'HIGH' region motif. The 'KMSKS' region motif lies at Lys229–Ser233. Lys232 contributes to the ATP binding site. Residues Ile342–Phe402 enclose the S4 RNA-binding domain.

This sequence belongs to the class-I aminoacyl-tRNA synthetase family. TyrS type 2 subfamily. In terms of assembly, homodimer.

The protein localises to the cytoplasm. The enzyme catalyses tRNA(Tyr) + L-tyrosine + ATP = L-tyrosyl-tRNA(Tyr) + AMP + diphosphate + H(+). Its function is as follows. Catalyzes the attachment of tyrosine to tRNA(Tyr) in a two-step reaction: tyrosine is first activated by ATP to form Tyr-AMP and then transferred to the acceptor end of tRNA(Tyr). This chain is Tyrosine--tRNA ligase, found in Acinetobacter baylyi (strain ATCC 33305 / BD413 / ADP1).